The chain runs to 141 residues: Large ribosomal subunit protein uL16 (141 aa).

This sequence belongs to the universal ribosomal protein uL16 family. In terms of assembly, part of the 50S ribosomal subunit.

Its function is as follows. Binds 23S rRNA and is also seen to make contacts with the A and possibly P site tRNAs. This Campylobacter jejuni subsp. jejuni serotype O:6 (strain 81116 / NCTC 11828) protein is Large ribosomal subunit protein uL16.